The sequence spans 625 residues: Ankyrin repeat domain-containing protein oryK (625 aa).

9 ANK repeats span residues 1-27 (MDIY…DVDG), 31-60 (DGKT…GRGP), 62-89 (NPSL…NAER), 90-119 (EHRS…EYQD), 162-195 (FFDY…DVNC), 202-232 (QFET…DLTI), 500-530 (DTRC…NVNF), 534-562 (SDRT…DIDL), and 568-598 (EGRT…DFSI).

It functions in the pathway secondary metabolite biosynthesis. In terms of biological role, ankyrin repeat domain-containing protein; part of the gene cluster that mediates the biosynthesis of oryzines, natural products with an unusual maleidride backbone. The two subunits of the fungal fatty acid synthase oryfasA and oryfasB probably form octenoic acid. This fatty acid is most likely activated by the acyl-CoA ligase oryP to give octenyl-CoA before the citrate synthase-like protein oryE catalyzes condensation with oxaloacetate to form tricarboxylic acid. The next steps of the pathways are conjectural, but a favorite possible route has been proposed, beginning with decarboxylation and concomitant dehydration by the decarboxylase oryM, followed by tautomerization, which may lead to the production of a diene intermediate. Reduction of this diene intermediate could give the known metabolite piliformic acid. On the pathway to oryzine B and oryzine A, however, hydroxylation of the diene by the alpha-ketoglutarate-dependent dioxygenase oryG and lactonisation by the lactonohydrolases oryH or oryL could give oryzine B directly. Finally, enoyl reduction by the dehydrogenase oryD would then convert oryzine B into oryzine A. The polypeptide is Ankyrin repeat domain-containing protein oryK (Aspergillus oryzae (strain ATCC 42149 / RIB 40) (Yellow koji mold)).